A 1238-amino-acid chain; its full sequence is Erythroid differentiation-related factor 1 (1238 aa).

Disordered stretches follow at residues 1–38 (MGDA…AQGS), 220–268 (QPVS…GSEP), 517–561 (PKKE…SDDS), and 620–647 (KKES…RGGP). 3 stretches are compositionally biased toward low complexity: residues 9–38 (AEGP…AQGS), 223–241 (SSTA…NDSE), and 253–263 (SSVSEDPSASS). Residues 530–547 (NSDESYSEEEEEMPDSDE) show a composition bias toward acidic residues. TPR repeat units lie at residues 693 to 726 (SKAY…HDTY) and 914 to 953 (AQAH…LGTR).

It localises to the nucleus. Its function is as follows. Transcription factor involved in erythroid differentiation. Involved in transcriptional activation of the globin gene. This Homo sapiens (Human) protein is Erythroid differentiation-related factor 1 (EDRF1).